We begin with the raw amino-acid sequence, 257 residues long: Granzyme M (257 aa).

Residues 1–23 form the signal peptide; sequence MEACVSSLLVLALGALSVGSSFG. A propeptide spans 24-25 (activation peptide); that stretch reads TQ. Residues 26 to 254 enclose the Peptidase S1 domain; it reads IIGGREVIPH…YVSWIRKVTG (229 aa). Cysteine 51 and cysteine 67 form a disulfide bridge. Catalysis depends on charge relay system residues histidine 66 and aspartate 111. 3 disulfides stabilise this stretch: cysteine 145-cysteine 213, cysteine 176-cysteine 192, and cysteine 203-cysteine 230. Asparagine 177 is a glycosylation site (N-linked (GlcNAc...) asparagine). Serine 207 serves as the catalytic Charge relay system.

Belongs to the peptidase S1 family. Granzyme subfamily. In terms of tissue distribution, highly and constitutively expressed in activated natural killer (NK) cells.

Its subcellular location is the secreted. It is found in the cytoplasmic granule. In terms of biological role, cleaves peptide substrates after methionine, leucine, and norleucine. Physiological substrates include EZR, alpha-tubulins and the apoptosis inhibitor BIRC5/Survivin. Promotes caspase activation and subsequent apoptosis of target cells. The protein is Granzyme M (GZMM) of Homo sapiens (Human).